Consider the following 249-residue polypeptide: Gamma-glutamyl peptidase 3 (249 aa).

The Glutamine amidotransferase type-1 domain maps to 19-217; sequence SEFVKKTYGG…VDRVLNMKLM (199 aa). Residue Cys-103 is the Nucleophile of the active site. Catalysis depends on residues His-196 and Glu-198.

This sequence belongs to the peptidase C26 family.

Its subcellular location is the cytoplasm. The protein localises to the cytosol. The enzyme catalyses an S-[(1E)-1-(hydroxyimino)-omega-(methylsulfanyl)alkyl]-L-glutathione + H2O = an S-[(1E)-1-(hydroxyimino)-omega-(methylsulfanyl)alkyl]-L-cysteinylglycine + L-glutamate. It catalyses the reaction (E)-1-(glutathione-S-yl)-2-(1H-indol-3-yl)acetohydroximate + H2O = (E)-1-(glycyl-L-cystein-S-yl)-2-(1H-indol-3-yl)acetohydroximate + L-glutamate. The catalysed reaction is 2-(glutathion-S-yl)-2-(1H-indol-3-yl)acetonitrile + H2O = 2-(glycyl-L-cystein-S-yl)-2-(1H-indol-3-yl)acetonitrile + L-glutamate. It carries out the reaction (Z)-1-(glutathione-S-yl)-2-phenylacetohydroximate + H2O = (Z)-1-(glycyl-L-cystein-S-yl)-2-phenylacetohydroximate + L-glutamate. It participates in secondary metabolite biosynthesis. Its function is as follows. Involved in glucosinolate biosynthesis. Hydrolyzes the gamma-glutamyl peptide bond of several glutathione (GSH) conjugates to produce Cys-Gly conjugates related to glucosinolates. The gamma-Glu-Cys-Gly-GSH conjugates are the sulfur-donating molecule in glucosinolate biosynthesis. Can use the GSH conjugate of the camalexin intermediate IAN (GS-IAN) as substrate. Required for the biosynthesis of camalexin, a pathogen-inducible phytoalexin with antibacterial and antifungal properties. This chain is Gamma-glutamyl peptidase 3, found in Arabidopsis thaliana (Mouse-ear cress).